Reading from the N-terminus, the 132-residue chain is Putative F-box protein At4g05620 (132 aa).

The 47-residue stretch at glutamine 17–arginine 63 folds into the F-box domain.

The polypeptide is Putative F-box protein At4g05620 (Arabidopsis thaliana (Mouse-ear cress)).